A 135-amino-acid polypeptide reads, in one-letter code: Transcriptional activator protein (135 aa).

The Nuclear localization signal motif lies at 17–32 (KAQHKVAKKRAIRRSR). A zinc finger spans residues 37–54 (CGCSYYIHINCRNYGFSH). Residues 82-102 (AAPSNSSRVPDVCDPNTDNVQ) are disordered. Residues 120–135 (ALPLFDGDFWDDIIDF) are transactivation.

Belongs to the geminiviridae transcriptional activator protein family. As to quaternary structure, monomer. Homodimer. Homooligomer. Self-interaction correlates with nuclear localization and efficient activation of transcription. Monomers suppress local silencing by interacting with and inactivating host adenosine kinase 2 (ADK2) in the cytoplasm. Interacts with and inhibits host SNF1 kinase. Binds to ssDNA. Post-translationally, phosphorylated.

The protein localises to the host nucleus. It localises to the host cytoplasm. Strong activator of the late viral genes promoters. Enhances the expression of the capsid protein and nuclear shuttle protein. Acts as a suppressor of RNA-mediated gene silencing, also known as post-transcriptional gene silencing (PTGS), a mechanism of plant viral defense that limits the accumulation of viral RNAs. Suppresses the host RNA silencing by inhibiting adenosine kinase 2 (ADK2), a kinase involved in a general methylation pathway. Also suppresses the host basal defense by interacting with and inhibiting SNF1 kinase, a key regulator of cell metabolism implicated in innate antiviral defense. Determines pathogenicity. This is Transcriptional activator protein from Mungbean yellow mosaic virus (strain Vigna) (MYMV).